The following is a 431-amino-acid chain: Enolase (431 aa).

Gln-163 contributes to the (2R)-2-phosphoglycerate binding site. Glu-205 (proton donor) is an active-site residue. 3 residues coordinate Mg(2+): Asp-242, Glu-288, and Asp-315. (2R)-2-phosphoglycerate is bound by residues Lys-340, Arg-369, Ser-370, and Lys-391. Lys-340 (proton acceptor) is an active-site residue.

Belongs to the enolase family. Mg(2+) is required as a cofactor.

It localises to the cytoplasm. It is found in the secreted. Its subcellular location is the cell surface. The enzyme catalyses (2R)-2-phosphoglycerate = phosphoenolpyruvate + H2O. It functions in the pathway carbohydrate degradation; glycolysis; pyruvate from D-glyceraldehyde 3-phosphate: step 4/5. In terms of biological role, catalyzes the reversible conversion of 2-phosphoglycerate (2-PG) into phosphoenolpyruvate (PEP). It is essential for the degradation of carbohydrates via glycolysis. The sequence is that of Enolase from Latilactobacillus sakei subsp. sakei (strain 23K) (Lactobacillus sakei subsp. sakei).